A 237-amino-acid polypeptide reads, in one-letter code: Oligoribonuclease, mitochondrial (237 aa).

The N-terminal 25 residues, 1–25, are a transit peptide targeting the mitochondrion; sequence MLGGSLGSRLLRGVGGTRGQFRARG. Positions 43-207 constitute an Exonuclease domain; the sequence is MVWVDLEMTG…DDISESIKEL (165 aa). Mg(2+)-binding residues include Asp47 and Glu49. Position 92 is a phosphoserine (Ser92). Tyr122 is subject to Phosphotyrosine. Mg(2+) is bound at residue Asp147. Lys173 carries the N6-acetyllysine modification. Residue His194 is part of the active site. A Mg(2+)-binding site is contributed by Asp199.

The protein belongs to the oligoribonuclease family. As to quaternary structure, homodimer. Homotetramer. Mn(2+) is required as a cofactor. Mg(2+) serves as cofactor.

The protein resides in the mitochondrion intermembrane space. It is found in the mitochondrion matrix. The protein localises to the mitochondrion. Its subcellular location is the cytoplasm. It localises to the nucleus. Its function is as follows. 3'-to-5'exoribonuclease that preferentially degrades DNA and RNA oligonucleotides composed of only two nucleotides. Binds and degrades longer oligonucleotides with a lower affinity. Plays dual roles in mitochondria, scavenging nanoRNAs (small RNA oligonucleotides of &lt;5 nucleotides) that are produced by the degradosome and clearing short RNAs that are generated by RNA processing. Essential for correct initiation of mitochondrial transcription, degrading mitochondrial RNA dinucleotides to prevent RNA-primed transcription at non-canonical sites in the mitochondrial genome. Essential for embryonic development. The protein is Oligoribonuclease, mitochondrial (REXO2) of Bos taurus (Bovine).